A 307-amino-acid polypeptide reads, in one-letter code: Agmatinase (307 aa).

Positions 128, 151, 153, 155, 232, and 234 each coordinate Mn(2+).

It belongs to the arginase family. Agmatinase subfamily. It depends on Mn(2+) as a cofactor.

It catalyses the reaction agmatine + H2O = urea + putrescine. The protein operates within amine and polyamine biosynthesis; putrescine biosynthesis via agmatine pathway; putrescine from agmatine: step 1/1. Catalyzes the formation of putrescine from agmatine. The polypeptide is Agmatinase (Neisseria meningitidis serogroup A / serotype 4A (strain DSM 15465 / Z2491)).